Consider the following 225-residue polypeptide: RNA-binding protein 24 (225 aa).

Residues 11-88 form the RRM domain; sequence TKIFVGGLPY…RKANVNLAYL (78 aa).

Its subcellular location is the nucleus. It localises to the cytoplasm. In terms of biological role, multifunctional RNA-binding protein involved in the regulation of pre-mRNA splicing, mRNA stability and mRNA translation important for cell fate decision and differentiation. Plays a major role in pre-mRNA alternative splicing regulation. Mediates preferentially muscle-specific exon inclusion in numerous mRNAs important for striated cardiac and skeletal muscle cell differentiation. Binds to intronic splicing enhancer (ISE) composed of stretches of GU-rich motifs localized in flanking intron of exon that will be included by alternative splicing. Involved in embryonic stem cell (ESC) transition to cardiac cell differentiation by promoting pre-mRNA alternative splicing events of several pluripotency and/or differentiation genes. Plays a role in the regulation of mRNA stability and mRNA translation to which it is bound. Involved in myogenic differentiation by regulating MYOG levels. Binds to a huge amount of mRNAs. Involved in embryonic heart development and myogenic differentiation of somitic muscle progenitors. This Gallus gallus (Chicken) protein is RNA-binding protein 24.